Consider the following 991-residue polypeptide: 5'-3' exoribonuclease 2 (991 aa).

Positions 264–268 match the Nuclear localization signal motif; the sequence is TKKTK. Over residues 404-418 the composition is skewed to basic and acidic residues; that stretch reads RRNENYRRRQQRESN. Disordered stretches follow at residues 404 to 461, 547 to 582, and 872 to 991; these read RRNE…TQKI, SIES…ENTD, and AERS…NGYY. The span at 433–452 shows a compositional bias: low complexity; the sequence is SVETQSTEVVTSSKSTSVDT. Composition is skewed to low complexity over residues 878–889 and 896–910; these read SRRNNGNSYRGG and RRSY…RQSY. A compositionally biased stretch (polar residues) spans 926–938; it reads WSGNGNFPRSNAS. Over residues 946-958 the composition is skewed to gly residues; the sequence is EGYGGRSRGGGYS. Positions 980 to 991 are enriched in polar residues; that stretch reads ESYNNNNRNGYY.

Belongs to the 5'-3' exonuclease family. XRN2/RAT1 subfamily. As to quaternary structure, interacts with din1/rai1; the interaction is direct, stabilizes dhp1 protein structure and may stimulate its exoribonuclease activity. The interaction also stimulates din1 pyrophosphohydrolase activity, probably by recruiting it to mRNA substrates.

It localises to the nucleus. Possesses 5'-&gt;3' exoribonuclease activity. Required for the processing of nuclear mRNA and rRNA precursors. May promote the termination of transcription by RNA polymerase II. Essential for vegetative cell growth and chromosome segregation. This is 5'-3' exoribonuclease 2 (dhp1) from Schizosaccharomyces pombe (strain 972 / ATCC 24843) (Fission yeast).